Reading from the N-terminus, the 437-residue chain is Glutamyl-tRNA reductase (437 aa).

Residues 49 to 52 (TCNR), serine 109, 114 to 116 (EGQ), and glutamine 120 each bind substrate. Catalysis depends on cysteine 50, which acts as the Nucleophile. 198-203 (GAGRMS) contacts NADP(+).

The protein belongs to the glutamyl-tRNA reductase family. Homodimer.

It catalyses the reaction (S)-4-amino-5-oxopentanoate + tRNA(Glu) + NADP(+) = L-glutamyl-tRNA(Glu) + NADPH + H(+). Its pathway is porphyrin-containing compound metabolism; protoporphyrin-IX biosynthesis; 5-aminolevulinate from L-glutamyl-tRNA(Glu): step 1/2. It functions in the pathway porphyrin-containing compound metabolism; chlorophyll biosynthesis. Catalyzes the NADPH-dependent reduction of glutamyl-tRNA(Glu) to glutamate 1-semialdehyde (GSA). The polypeptide is Glutamyl-tRNA reductase (Synechococcus sp. (strain CC9311)).